The primary structure comprises 695 residues: Potassium voltage-gated channel subfamily KQT member 4 (695 aa).

The disordered stretch occupies residues Met-1–Ala-21. The Cytoplasmic segment spans residues Met-1 to Gly-96. Arg-93 provides a ligand contact to a 1,2-diacyl-sn-glycero-3-phospho-(1D-myo-inositol-4,5-bisphosphate). The helical transmembrane segment at Trp-97 to Leu-118 threads the bilayer. At Ser-119–Asn-129 the chain is on the extracellular side. Residues Glu-130 to Trp-152 form a helical membrane-spanning segment. Residues Ser-153–Arg-168 are Cytoplasmic-facing. A helical transmembrane segment spans residues Phe-169–Ala-191. An a 1,2-diacyl-sn-glycero-3-phospho-(1D-myo-inositol-4,5-bisphosphate)-binding site is contributed by Lys-172. At Gly-192–Ala-202 the chain is on the extracellular side. The chain crosses the membrane as a helical; Voltage-sensor span at residues Leu-203 to Thr-223. The a 1,2-diacyl-sn-glycero-3-phospho-(1D-myo-inositol-4,5-bisphosphate) site is built by Arg-219, Arg-220, Lys-225, and Ser-235. The Cytoplasmic portion of the chain corresponds to Trp-224–Ser-235. The helical transmembrane segment at Lys-236–Leu-258 threads the bilayer. Residues Ala-259–Tyr-270 lie on the Extracellular side of the membrane. Residues Ala-271–His-292 constitute an intramembrane region (pore-forming). Position 293 (Thr-293) is a topological domain, extracellular. Residues Trp-294–Phe-322 form a helical membrane-spanning segment. Residues Ala-323–Asp-695 are Cytoplasmic-facing. Residues His-330 and Lys-333 each coordinate a 1,2-diacyl-sn-glycero-3-phospho-(1D-myo-inositol-4,5-bisphosphate). An interaction with CALM region spans residues Ala-342 to Arg-351. The disordered stretch occupies residues Arg-441–Trp-483. Polar residues-rich tracts occupy residues Met-442–Ser-452 and Ser-464–Trp-483. The tract at residues Arg-535 to Phe-549 is interaction with CALM. Positions Lys-546 to Ala-650 are C-terminal assembly domain (tetramerization). The tract at residues Gly-588–Glu-608 is disordered. A compositionally biased stretch (basic and acidic residues) spans Pro-591–Ser-605.

This sequence belongs to the potassium channel family. KQT (TC 1.A.1.15) subfamily. Kv7.4/KCNQ4 sub-subfamily. Homotetramer. Interacts (via C-terminus) with calmodulin; forms a heterooctameric structure (with 4:4 KCNQ1:CALM stoichiometry); the interaction is calcium-independent, constitutive, participates in the proper assembly of a functional channel. The interaction with calcium-free CALM controls channel trafficking whereas interaction with calcium-bound CALM regulates channel gating. May form a functional heteromultimeric channel with KCNQ3. Interacts with HSP90AB1; promotes cell surface expression of KCNQ4. Expressed in both the inner (IHCs) and the outer hair cells (OHCs) of the cochlea. Reciprocal longitudinal gradients of expression is present in IHCs and OHCs. The strongest expression in IHCs is in the base of the cochlea and in the apex for OHCs. A basal to apical gradient of expression is also present in both type I and type II spiral ganglion cells.

The protein localises to the basal cell membrane. It catalyses the reaction K(+)(in) = K(+)(out). With respect to regulation, two molecules of phosphatidylinositol-4,5-bisphosphate (PIP2-I and PIP2-II) are essential to activate KCNQ4 channel by inducing the coupling of the voltage-sensing domain (VSD) and the pore-forming domain (PD). Upon channel activation, PIP2-I and PIP2-II disrupt the VSD-calmodulin/CALM interaction, causing the release of CALM from the VSD which triggers the opening of the gate. Calcium suppresses KCNQ4 channel current through calcium-bound CALM C-terminus. Therefore CALM acts as calcium sensor that controls channel activity. Functionally, pore-forming subunit of the voltage-gated potassium (Kv) channel involved in the regulation of sensory cells excitability in the cochlea. KCNQ4/Kv7.4 channel is composed of 4 pore-forming subunits assembled as tetramers. Promotes the outflow of potassium ions in the repolarization phase of action potential which plays a role in regulating membrane potential of excitable cells. The channel conducts a slowly activating and deactivating current. Current often shows some inward rectification at positive potentials. Channel may be selectively permeable in vitro to other cations besides potassium, in decreasing order of affinity K(+) = Rb(+) &gt; Cs(+) &gt; Na(+). Important for normal physiological function of inner ear such as sensory perception of sound. This Rattus norvegicus (Rat) protein is Potassium voltage-gated channel subfamily KQT member 4.